The primary structure comprises 451 residues: 2-succinylbenzoate--CoA ligase (451 aa).

It belongs to the ATP-dependent AMP-binding enzyme family. MenE subfamily.

It catalyses the reaction 2-succinylbenzoate + ATP + CoA = 2-succinylbenzoyl-CoA + AMP + diphosphate. It functions in the pathway quinol/quinone metabolism; 1,4-dihydroxy-2-naphthoate biosynthesis; 1,4-dihydroxy-2-naphthoate from chorismate: step 5/7. It participates in quinol/quinone metabolism; menaquinone biosynthesis. Functionally, converts 2-succinylbenzoate (OSB) to 2-succinylbenzoyl-CoA (OSB-CoA). This is 2-succinylbenzoate--CoA ligase from Lactococcus lactis subsp. lactis (strain IL1403) (Streptococcus lactis).